Reading from the N-terminus, the 571-residue chain is Chondroitin sulfate proteoglycan 5 (571 aa).

Residues 1-30 form the signal peptide; the sequence is MGRAGGGGPGWGPPPVLLLLGVTLVLTAGA. Over 31 to 428 the chain is Extracellular; the sequence is VPAREAGSAI…SIITDFQVMC (398 aa). A glycan (O-linked (Xyl...) (chondroitin sulfate) serine) is linked at S38. N57 is a glycosylation site (N-linked (GlcNAc...) asparagine). The interval 57-91 is disordered; it reads NDTREEAGLPAAGEDETSWTERGSELAAVGPGVGP. T76 is a glycosylation site (O-linked (GalNAc...) threonine). An O-linked (Xyl...) (chondroitin sulfate) serine glycan is attached at S123. A glycan (O-linked (GalNAc...) threonine) is linked at T132. 3 disordered regions span residues 137-169, 186-254, and 279-357; these read DEAL…KPSL, GGST…TPSW, and DDLE…DLAT. S143 carries O-linked (GalNAc...) serine glycosylation. O-linked (GalNAc...) threonine glycans are attached at residues T144 and T153. Residues S156 and S160 are each glycosylated (O-linked (GalNAc...) serine). O-linked (GalNAc...) threonine glycans are attached at residues T162 and T198. The span at 214–223 shows a compositional bias: acidic residues; that stretch reads IDIDYFEGLD. O-linked (GalNAc...) threonine glycosylation is present at T240. The interval 270 to 306 is interaction with TNC and TNR; that stretch reads DFYPTTSFYDDLEEEEEEEEDKDAVGGGDLEDESDLL. A compositionally biased stretch (acidic residues) spans 279-291; sequence DDLEEEEEEEEDK. O-linked (GalNAc...) threonine glycans are attached at residues T318 and T322. N372 carries an N-linked (GlcNAc...) asparagine glycan. Residues 376–418 form the EGF-like domain; that stretch reads RSVCDLFPSYCHNGGQCYLVENIGAFCRCNTQDYIWHKGMRCE. Disulfide bonds link C379-C392, C386-C402, and C404-C417. The helical transmembrane segment at 429 to 449 threads the bilayer; sequence VAVGSAALVLLLLFMMTVFFA. The tract at residues 447 to 465 is interaction with GOPC; sequence FFAKKLYLLKTENTKLRRT. The Cytoplasmic segment spans residues 450-571; sequence KKLYLLKTEN…EVNCLQNNLT (122 aa). A phosphoserine mark is found at S472, S480, S488, and S548. Residues 538-563 are disordered; it reads EESFNIQNSMSPKLEGGKGDQDDLEV.

Interacts with ERBB3 and GOPC. Binds TNR and probably TNC. Interacts with MDK; this interaction is independent of the presence of chondroitin sulfate chains and promotes elongation of oligodendroglial precursor-like cells. In terms of processing, N-glycosylated. O-glycosylated; contains chondroitin sulfate glycans. Part-time proteoglycan, expressed in part as a proteoglycan exhibiting chondroitin sulfate glycans and in part as a non-proteoglycan form. The relative amount of both forms depends on tissues and tissue maturation. Post-translationally, phosphorylated; in intracellular and extracellular parts. In terms of tissue distribution, expressed in cerebral cortex and cerebellum. Expressed in retina (at protein level).

The protein resides in the cell membrane. The protein localises to the synaptic cell membrane. It localises to the endoplasmic reticulum membrane. Its subcellular location is the golgi apparatus membrane. It is found in the cell surface. The protein resides in the secreted. Its function is as follows. May function as a growth and differentiation factor involved in neuritogenesis. May induce ERBB3 activation. The protein is Chondroitin sulfate proteoglycan 5 (Cspg5) of Rattus norvegicus (Rat).